A 172-amino-acid polypeptide reads, in one-letter code: Cyclin-L1 (172 aa).

The interval 1-36 (MASGPHSTATAAAAASSAAPSAGGSSSGTTTTTTTT) is disordered. Positions 88–168 (ELIQAAGILL…LRGKSDQLHL (81 aa)) are cyclin-like.

Belongs to the cyclin family. Cyclin L subfamily. As to quaternary structure, interacts with POLR2A via its hyperphosphorylated C-terminal domain (CTD). Interacts with CDK11A, CDK11B, CDK12 and CDK13. May form a ternary complex with CDK11B and casein kinase II (CKII). Interacts with pre-mRNA-splicing factors, including at least SRSF1, SRSF2 and SRSF7/SLU7.

The protein resides in the nucleus speckle. Its subcellular location is the nucleus. It localises to the nucleoplasm. In terms of biological role, involved in pre-mRNA splicing. Functions in association with cyclin-dependent kinases (CDKs). May play a role in the regulation of RNA polymerase II (pol II). Inhibited by the CDK-specific inhibitor CDKN1A/p21. This Pongo abelii (Sumatran orangutan) protein is Cyclin-L1 (CCNL1).